The sequence spans 873 residues: DNA mismatch repair protein MutS (873 aa).

The segment at 1–34 (MAAIPTPRLHRGVTHLSRQTKSRARHPMSTPQHT) is disordered. Basic residues predominate over residues 8–26 (RLHRGVTHLSRQTKSRARH). Position 635–642 (635–642 (GPNMGGKS)) interacts with ATP.

The protein belongs to the DNA mismatch repair MutS family.

Its function is as follows. This protein is involved in the repair of mismatches in DNA. It is possible that it carries out the mismatch recognition step. This protein has a weak ATPase activity. This is DNA mismatch repair protein MutS from Chromobacterium violaceum (strain ATCC 12472 / DSM 30191 / JCM 1249 / CCUG 213 / NBRC 12614 / NCIMB 9131 / NCTC 9757 / MK).